The sequence spans 192 residues: Transcription termination/antitermination protein NusG (192 aa).

The 29-residue stretch at 140-168 folds into the KOW domain; that stretch reads VGEVVTVTDGPFETFMGTVEEIDKERNRL.

The protein belongs to the NusG family.

In terms of biological role, participates in transcription elongation, termination and antitermination. The sequence is that of Transcription termination/antitermination protein NusG from Rickettsia typhi (strain ATCC VR-144 / Wilmington).